A 449-amino-acid chain; its full sequence is UDP-N-acetylmuramoylalanine--D-glutamate ligase (449 aa).

Residue 111-117 coordinates ATP; that stretch reads GTNGKST.

The protein belongs to the MurCDEF family.

The protein resides in the cytoplasm. It catalyses the reaction UDP-N-acetyl-alpha-D-muramoyl-L-alanine + D-glutamate + ATP = UDP-N-acetyl-alpha-D-muramoyl-L-alanyl-D-glutamate + ADP + phosphate + H(+). It participates in cell wall biogenesis; peptidoglycan biosynthesis. Functionally, cell wall formation. Catalyzes the addition of glutamate to the nucleotide precursor UDP-N-acetylmuramoyl-L-alanine (UMA). This is UDP-N-acetylmuramoylalanine--D-glutamate ligase from Rickettsia felis (strain ATCC VR-1525 / URRWXCal2) (Rickettsia azadi).